The primary structure comprises 630 residues: MSTNNALRVFWKSREWNMKTSTFDSDEDILLLPKRKRFRKKKSRPVRHTKRHEEEQVYEQGTTLPCSICKHEIDLTGIFLHKKQHVALATLGFQWMGRKKPQPSVIAVQRQFMISKLLSSFMFTEKTLQSINNAFELLWKKQIPAYYKIFDNIDRSVIYSQKICHLLIKGVGICEDRNSTWKADMNDKFTVVSNFGNKPNVCFFGLFDGHHGASAAELTSMELPVLLLHQLSKFDPSYQMTTDEQQIINSFYTVFREEYAAIEDLFSAINKTEAVRCEYEDTHKAFAKAFWRMDRLLGLGRKEVSRVQWSGCSAVTCILEGKPKSPYAHKNWKRKNTHDGLAESSPSQEMPKIISGILHVANTGNVQAVLCRNGKGFCLTKEHTTRNTNERRRILQNGAVISSNEPYGLVEGQVKTTRGLGFHGNLKLKKSIIPAPQTISVPIDDLCQFLIVATNGLWEVLDKEEVTALAMTTFHMYKETYCPIIPNKSPSKGPLLFSTSEPNLTKSQSNIHVLFQYKSVSEVRVSTTNSKENLSDSNYSKYCIYNPENVETFPAETTHRKPCSEKVTDRPTSVNDVATNEKESDTKSFYEGAAEYVSHELVNAALLAGSRDNITVMVIFLNGSEYQLLT.

A PPM-type phosphatase domain is found at 170-621 (GVGICEDRNS…DNITVMVIFL (452 aa)). The span at 557 to 569 (TTHRKPCSEKVTD) shows a compositional bias: basic and acidic residues. Residues 557–578 (TTHRKPCSEKVTDRPTSVNDVA) are disordered.

Belongs to the PP2C family.

In Homo sapiens (Human), this protein is Protein phosphatase 2C-like domain-containing protein 1 (PP2D1).